The sequence spans 349 residues: Heat-inducible transcription repressor HrcA (349 aa).

Belongs to the HrcA family.

In terms of biological role, negative regulator of class I heat shock genes (grpE-dnaK-dnaJ and groELS operons). Prevents heat-shock induction of these operons. This is Heat-inducible transcription repressor HrcA from Xylella fastidiosa (strain 9a5c).